The chain runs to 123 residues: ATP synthase epsilon chain (123 aa).

The segment at 96–123 (ESRKQSAETEHDKAVAESELRAVKRMEA) is disordered.

It belongs to the ATPase epsilon chain family. As to quaternary structure, F-type ATPases have 2 components, CF(1) - the catalytic core - and CF(0) - the membrane proton channel. CF(1) has five subunits: alpha(3), beta(3), gamma(1), delta(1), epsilon(1). CF(0) has three main subunits: a, b and c.

The protein localises to the cell membrane. Functionally, produces ATP from ADP in the presence of a proton gradient across the membrane. In Corynebacterium jeikeium (strain K411), this protein is ATP synthase epsilon chain.